Consider the following 192-residue polypeptide: Potassium-transporting ATPase KdpC subunit (192 aa).

The helical transmembrane segment at leucine 14–alanine 34 threads the bilayer.

Belongs to the KdpC family. In terms of assembly, the system is composed of three essential subunits: KdpA, KdpB and KdpC.

Its subcellular location is the cell membrane. Its function is as follows. Part of the high-affinity ATP-driven potassium transport (or Kdp) system, which catalyzes the hydrolysis of ATP coupled with the electrogenic transport of potassium into the cytoplasm. This subunit acts as a catalytic chaperone that increases the ATP-binding affinity of the ATP-hydrolyzing subunit KdpB by the formation of a transient KdpB/KdpC/ATP ternary complex. The sequence is that of Potassium-transporting ATPase KdpC subunit from Bacillus cytotoxicus (strain DSM 22905 / CIP 110041 / 391-98 / NVH 391-98).